Here is a 628-residue protein sequence, read N- to C-terminus: DNA ligase (628 aa).

NAD(+) contacts are provided by residues 36–40 (DVEYD), 85–86 (SL), and Glu-117. Lys-119 serves as the catalytic N6-AMP-lysine intermediate. NAD(+) contacts are provided by Arg-140, Glu-174, Lys-309, and Lys-333. Cys-427, Cys-430, Cys-446, and Cys-452 together coordinate Zn(2+).

This sequence belongs to the NAD-dependent DNA ligase family. LigA subfamily. It depends on Mg(2+) as a cofactor. Mn(2+) serves as cofactor.

It catalyses the reaction NAD(+) + (deoxyribonucleotide)n-3'-hydroxyl + 5'-phospho-(deoxyribonucleotide)m = (deoxyribonucleotide)n+m + AMP + beta-nicotinamide D-nucleotide.. Its function is as follows. DNA ligase that catalyzes the formation of phosphodiester linkages between 5'-phosphoryl and 3'-hydroxyl groups in double-stranded DNA using NAD as a coenzyme and as the energy source for the reaction. It is essential for DNA replication and repair of damaged DNA. The chain is DNA ligase from Tropheryma whipplei (strain Twist) (Whipple's bacillus).